A 383-amino-acid polypeptide reads, in one-letter code: Arginine biosynthesis bifunctional protein ArgJ 1 (383 aa).

Positions 1 to 25 (MTVTAPKGSTGGGCRRGSKESGQPD) are disordered. Substrate is bound by residues T146, K168, T179, E259, N378, and S383. Residue T179 is the Nucleophile of the active site.

Belongs to the ArgJ family. In terms of assembly, heterotetramer of two alpha and two beta chains.

Its subcellular location is the cytoplasm. It carries out the reaction N(2)-acetyl-L-ornithine + L-glutamate = N-acetyl-L-glutamate + L-ornithine. The catalysed reaction is L-glutamate + acetyl-CoA = N-acetyl-L-glutamate + CoA + H(+). Its pathway is amino-acid biosynthesis; L-arginine biosynthesis; L-ornithine and N-acetyl-L-glutamate from L-glutamate and N(2)-acetyl-L-ornithine (cyclic): step 1/1. The protein operates within amino-acid biosynthesis; L-arginine biosynthesis; N(2)-acetyl-L-ornithine from L-glutamate: step 1/4. Catalyzes two activities which are involved in the cyclic version of arginine biosynthesis: the synthesis of N-acetylglutamate from glutamate and acetyl-CoA as the acetyl donor, and of ornithine by transacetylation between N(2)-acetylornithine and glutamate. The sequence is that of Arginine biosynthesis bifunctional protein ArgJ 1 from Streptomyces clavuligerus.